The primary structure comprises 160 residues: UPF0479 membrane protein YLL066W-A (160 aa).

Transmembrane regions (helical) follow at residues 39–59 (IVFCLPFFPALFLVPVQKVLQ) and 136–156 (VPMIWLDVFQVFFVFLVISQH).

This sequence belongs to the UPF0479 family.

It is found in the membrane. This Saccharomyces cerevisiae (strain ATCC 204508 / S288c) (Baker's yeast) protein is UPF0479 membrane protein YLL066W-A.